The sequence spans 559 residues: uncharacterized protein (559 aa).

Disordered stretches follow at residues 315–360 (TDDA…ERDI) and 454–559 (DKID…STEN). The segment covering 320–329 (NENSDNSMNT) has biased composition (polar residues). Acidic residues predominate over residues 348 to 357 (DNNDDSDDSE). Residues 433–495 (ELKIQEMEKI…KRRQKRSQRS (63 aa)) are a coiled coil. Positions 454–501 (DKIDMDQIKSEMSRRRDESNKRRDEKRKDREEKRRQKRSQRSDTRKQG) are enriched in basic and acidic residues. Positions 507–527 (SDEATSDQTQSTDSNNTTQTA) are enriched in low complexity.

The protein resides in the virion. This is an uncharacterized protein from Acanthamoeba polyphaga mimivirus (APMV).